The primary structure comprises 572 residues: Probable D-xylulose kinase A (572 aa).

Positions 95, 166, 282, and 283 each coordinate substrate. ATP contacts are provided by residues W365, 470 to 471 (GG), and N474.

It belongs to the FGGY kinase family.

The protein localises to the cytoplasm. It catalyses the reaction D-xylulose + ATP = D-xylulose 5-phosphate + ADP + H(+). Highly specific D-xylulose kinase which participates in the catabolism of xylose. Xylose is a major component of hemicelluloses such as xylan. Most fungi utilize D-xylose via three enzymatic reactions, xylose reductase (XR), xylitol dehydrogenase (XDH), and xylulokinase, to form xylulose 5-phosphate, which enters pentose phosphate pathway. This is Probable D-xylulose kinase A (xkiA) from Aspergillus flavus (strain ATCC 200026 / FGSC A1120 / IAM 13836 / NRRL 3357 / JCM 12722 / SRRC 167).